Reading from the N-terminus, the 367-residue chain is Quinolinate synthase (367 aa).

Iminosuccinate is bound by residues His-45 and Ser-62. Residue Cys-109 coordinates [4Fe-4S] cluster. Iminosuccinate-binding positions include 140-142 (YVN) and Ser-161. Position 229 (Cys-229) interacts with [4Fe-4S] cluster. Iminosuccinate is bound by residues 255 to 257 (HPE) and Thr-272. Cys-319 serves as a coordination point for [4Fe-4S] cluster.

It belongs to the quinolinate synthase family. Type 3 subfamily. [4Fe-4S] cluster serves as cofactor.

Its subcellular location is the cytoplasm. It catalyses the reaction iminosuccinate + dihydroxyacetone phosphate = quinolinate + phosphate + 2 H2O + H(+). It functions in the pathway cofactor biosynthesis; NAD(+) biosynthesis; quinolinate from iminoaspartate: step 1/1. Catalyzes the condensation of iminoaspartate with dihydroxyacetone phosphate to form quinolinate. This is Quinolinate synthase from Geobacillus kaustophilus (strain HTA426).